We begin with the raw amino-acid sequence, 654 residues long: Acetyl-coenzyme A synthetase (654 aa).

CoA contacts are provided by residues 191 to 194 (RRGQ) and Thr315. ATP is bound by residues 391-393 (GEP), 415-420 (DTWWQT), Asp506, and Arg521. Ser529 serves as a coordination point for CoA. Arg532 is an ATP binding site. Mg(2+) is bound by residues Val543, His545, and Val548. N6-acetyllysine is present on Lys615.

It belongs to the ATP-dependent AMP-binding enzyme family. Mg(2+) is required as a cofactor. Acetylated. Deacetylation by the SIR2-homolog deacetylase activates the enzyme.

It catalyses the reaction acetate + ATP + CoA = acetyl-CoA + AMP + diphosphate. In terms of biological role, catalyzes the conversion of acetate into acetyl-CoA (AcCoA), an essential intermediate at the junction of anabolic and catabolic pathways. AcsA undergoes a two-step reaction. In the first half reaction, AcsA combines acetate with ATP to form acetyl-adenylate (AcAMP) intermediate. In the second half reaction, it can then transfer the acetyl group from AcAMP to the sulfhydryl group of CoA, forming the product AcCoA. This Gemmatimonas aurantiaca (strain DSM 14586 / JCM 11422 / NBRC 100505 / T-27) protein is Acetyl-coenzyme A synthetase.